Here is a 239-residue protein sequence, read N- to C-terminus: Ribonuclease 3 (239 aa).

Residues 18–141 (YTTLEKALGY…LMAGVYLEAG (124 aa)) form the RNase III domain. Glu-54 is a binding site for Mg(2+). The active site involves Asp-58. The Mg(2+) site is built by Ser-127 and Glu-130. Glu-130 is a catalytic residue. A DRBM domain is found at 168–237 (DYKTALQELT…AYQALQKLKE (70 aa)).

This sequence belongs to the ribonuclease III family. Homodimer. Requires Mg(2+) as cofactor.

It is found in the cytoplasm. The catalysed reaction is Endonucleolytic cleavage to 5'-phosphomonoester.. Its function is as follows. Digests double-stranded RNA. Involved in the processing of primary rRNA transcript to yield the immediate precursors to the large and small rRNAs (23S and 16S). Processes some mRNAs, and tRNAs when they are encoded in the rRNA operon. Processes pre-crRNA and tracrRNA of type II CRISPR loci if present in the organism. This is Ribonuclease 3 from Helicobacter pylori (strain ATCC 700392 / 26695) (Campylobacter pylori).